We begin with the raw amino-acid sequence, 203 residues long: Small ribosomal subunit protein uS4 (203 aa).

The region spanning 93-156 (RRLDNVVYRL…AKVPAILEAV (64 aa)) is the S4 RNA-binding domain.

This sequence belongs to the universal ribosomal protein uS4 family. In terms of assembly, part of the 30S ribosomal subunit. Contacts protein S5. The interaction surface between S4 and S5 is involved in control of translational fidelity.

Functionally, one of the primary rRNA binding proteins, it binds directly to 16S rRNA where it nucleates assembly of the body of the 30S subunit. With S5 and S12 plays an important role in translational accuracy. The protein is Small ribosomal subunit protein uS4 of Streptococcus thermophilus (strain CNRZ 1066).